The primary structure comprises 346 residues: Phosphoribosylformylglycinamidine cyclo-ligase (346 aa).

Belongs to the AIR synthase family.

It is found in the cytoplasm. It catalyses the reaction 2-formamido-N(1)-(5-O-phospho-beta-D-ribosyl)acetamidine + ATP = 5-amino-1-(5-phospho-beta-D-ribosyl)imidazole + ADP + phosphate + H(+). Its pathway is purine metabolism; IMP biosynthesis via de novo pathway; 5-amino-1-(5-phospho-D-ribosyl)imidazole from N(2)-formyl-N(1)-(5-phospho-D-ribosyl)glycinamide: step 2/2. The protein is Phosphoribosylformylglycinamidine cyclo-ligase of Prochlorococcus marinus (strain NATL1A).